The chain runs to 90 residues: Probable Fe(2+)-trafficking protein (90 aa).

Belongs to the Fe(2+)-trafficking protein family.

In terms of biological role, could be a mediator in iron transactions between iron acquisition and iron-requiring processes, such as synthesis and/or repair of Fe-S clusters in biosynthetic enzymes. This Vibrio campbellii (strain ATCC BAA-1116) protein is Probable Fe(2+)-trafficking protein.